Consider the following 350-residue polypeptide: 2-oxoglutarate-dependent ethylene/succinate-forming enzyme (350 aa).

Residues Gly166 to Pro286 form the Fe2OG dioxygenase domain. Positions 189 and 268 each coordinate Fe cation.

The protein belongs to the iron/ascorbate-dependent oxidoreductase family. As to quaternary structure, monomer. It depends on Fe(2+) as a cofactor.

The enzyme catalyses 2-oxoglutarate + O2 + 2 H(+) = ethene + 3 CO2 + H2O. It carries out the reaction L-arginine + 2-oxoglutarate + O2 = guanidine + L-glutamate 5-semialdehyde + succinate + CO2. The protein operates within alkene biosynthesis; ethylene biosynthesis via 2-oxoglutarate. In terms of biological role, simultaneously catalyzes two reactions, namely formation of ethylene and of succinate from 2-oxoglutarate. In Pseudomonas amygdali pv. sesami (Pseudomonas syringae pv. sesami), this protein is 2-oxoglutarate-dependent ethylene/succinate-forming enzyme (efe).